A 447-amino-acid polypeptide reads, in one-letter code: Protein chibby homolog 2 (447 aa).

Phosphoserine occurs at positions 41, 85, 88, 96, 123, 143, 147, and 149. Residues Glu-164–Val-197 are a coiled coil. Disordered regions lie at residues His-208–Thr-244 and Trp-266–Lys-320. Phosphoserine is present on residues Ser-211 and Ser-224. Positions Leu-218–Asn-232 are enriched in basic and acidic residues. Positions Ala-237–Ala-264 form a coiled coil. Residues Trp-266–Ala-276 show a composition bias toward low complexity. Residues Ser-272 and Ser-275 each carry the phosphoserine modification. Over residues Glu-277–His-290 the composition is skewed to basic and acidic residues. Phosphoserine is present on residues Ser-333 and Ser-336. A coiled-coil region spans residues Leu-354 to Ile-412.

It belongs to the chibby family. SPERT subfamily. As to quaternary structure, homodimer. Binds to NEK1.

The chain is Protein chibby homolog 2 (Cby2) from Rattus norvegicus (Rat).